A 384-amino-acid chain; its full sequence is MEGVSATMHKLRPYLLMIFLQFGAAGTYIVIMATLNQGQNRYVVIVYRNLVAALVLAPFALIFERKVRPKMTLSVLWKIMALGFLEPVLDQGFGYLGMNMTSATYTSAIMNILPSVTFIIAWILRMEKVNIAEVRSKAKIIGTLVGLGGALVMTLYKGPLIPLPWSNPNMDQQNGHTNNSQDHNNWVVGTLLILLGCVAWSGFYVLQSITIKTYPADLSLSALICLAGAVQSFAVALVVERHPSGWAVGWDARLFAPLYTGIVSSGITYYVQGMVMKTRGPVFVTAFNPLCMILVALIASFILHEQIHFGCVIGGAVIAAGLYMVVWGKGKDYEVSGLDILEKNSLQELPITTKSEDDNKLVSSISDNSNVTIPGGAHSNTSGI.

10 helical membrane passes run 15 to 35 (LLMI…MATL), 43 to 63 (VVIV…ALIF), 73 to 93 (LSVL…DQGF), 104 to 124 (TYTS…AWIL), 140 to 160 (IIGT…KGPL), 186 to 206 (WVVG…FYVL), 219 to 239 (SLSA…ALVV), 255 to 275 (FAPL…QGMV), 282 to 302 (VFVT…ASFI), and 307 to 327 (IHFG…MVVW). 2 EamA domains span residues 25–154 (AGTY…LVMT) and 198–326 (VAWS…YMVV).

Belongs to the drug/metabolite transporter (DMT) superfamily. Plant drug/metabolite exporter (P-DME) (TC 2.A.7.4) family.

Its subcellular location is the membrane. The sequence is that of WAT1-related protein At4g08290 from Arabidopsis thaliana (Mouse-ear cress).